A 430-amino-acid polypeptide reads, in one-letter code: Histidine--tRNA ligase (430 aa).

The protein belongs to the class-II aminoacyl-tRNA synthetase family. In terms of assembly, homodimer.

It is found in the cytoplasm. The enzyme catalyses tRNA(His) + L-histidine + ATP = L-histidyl-tRNA(His) + AMP + diphosphate + H(+). The sequence is that of Histidine--tRNA ligase from Synechococcus sp. (strain CC9902).